Reading from the N-terminus, the 398-residue chain is MGNNVAETQIKPFTMNFGPQHPAAHGVLRLVLEMDGEVVQRADPHVGLLHRGTEKLIEYKTYIQALPYFDRLDYVSPMSQEHAFALATEKLLGITVPVRGQYIRVLFSEITRILNHLLNITTFGLDVGAITPSLWGFEEREKLMAFYERVSGARMHANYFRPGGVNLDMPAGLADDIWEYTERFPKFVADLNNLLTENRIFKQRTVDIGVVSRADALAWGFSGPMIRGSGVPWDLRKAQPYDRYDEFDFDIPVGSTGDCYARYLVRMEEMRQSNRLIRQALEKLAKTPGPVKVNDRKIAPPPRGEMKRSMESLIHHFKLYTEGYHVPAGETYTAVESPKGEFGVYLVSDGTNRPYRCKIRPTGFSHLQAMDFMSKGHMLADTVAIIGSMDIVFGEIDR.

Belongs to the complex I 49 kDa subunit family. In terms of assembly, NDH-1 is composed of 14 different subunits. Subunits NuoB, C, D, E, F, and G constitute the peripheral sector of the complex.

It localises to the cell inner membrane. It carries out the reaction a quinone + NADH + 5 H(+)(in) = a quinol + NAD(+) + 4 H(+)(out). Its function is as follows. NDH-1 shuttles electrons from NADH, via FMN and iron-sulfur (Fe-S) centers, to quinones in the respiratory chain. The immediate electron acceptor for the enzyme in this species is believed to be ubiquinone. Couples the redox reaction to proton translocation (for every two electrons transferred, four hydrogen ions are translocated across the cytoplasmic membrane), and thus conserves the redox energy in a proton gradient. This is NADH-quinone oxidoreductase subunit D from Rhodospirillum centenum (strain ATCC 51521 / SW).